The following is a 258-amino-acid chain: Triosephosphate isomerase (258 aa).

Position 11–13 (11–13 (NWK)) interacts with substrate. Histidine 101 acts as the Electrophile in catalysis. The active-site Proton acceptor is glutamate 173. Substrate is bound by residues glycine 179, serine 219, and 240 to 241 (GG).

The protein belongs to the triosephosphate isomerase family. In terms of assembly, homodimer.

The protein resides in the cytoplasm. The enzyme catalyses D-glyceraldehyde 3-phosphate = dihydroxyacetone phosphate. Its pathway is carbohydrate biosynthesis; gluconeogenesis. It functions in the pathway carbohydrate degradation; glycolysis; D-glyceraldehyde 3-phosphate from glycerone phosphate: step 1/1. Its function is as follows. Involved in the gluconeogenesis. Catalyzes stereospecifically the conversion of dihydroxyacetone phosphate (DHAP) to D-glyceraldehyde-3-phosphate (G3P). This Streptomyces avermitilis (strain ATCC 31267 / DSM 46492 / JCM 5070 / NBRC 14893 / NCIMB 12804 / NRRL 8165 / MA-4680) protein is Triosephosphate isomerase.